The chain runs to 312 residues: Ribosomal RNA small subunit methyltransferase H (312 aa).

Residues 35–37 (GGH), aspartate 55, phenylalanine 79, aspartate 100, and glutamine 107 contribute to the S-adenosyl-L-methionine site. The segment at 279–312 (LVGKSQRPGPGEVAANPRSRSAVMRVAERTGGAA) is disordered.

This sequence belongs to the methyltransferase superfamily. RsmH family.

The protein resides in the cytoplasm. It carries out the reaction cytidine(1402) in 16S rRNA + S-adenosyl-L-methionine = N(4)-methylcytidine(1402) in 16S rRNA + S-adenosyl-L-homocysteine + H(+). Its function is as follows. Specifically methylates the N4 position of cytidine in position 1402 (C1402) of 16S rRNA. This Aromatoleum aromaticum (strain DSM 19018 / LMG 30748 / EbN1) (Azoarcus sp. (strain EbN1)) protein is Ribosomal RNA small subunit methyltransferase H.